Reading from the N-terminus, the 226-residue chain is MMTNLFSVFDPSTTILNLSLNWLSTFLGLLIIPSTYWLMPNRFQIIWNNILLTLHKEFKTLLGPNGHNGSTLMFVSLFSLIMFNNFLGLFPYIFTSTSHLTLTLTLAFPLWLSFMLYGWICHTQHMFAHLVPQGTPPVLMPFMVCIETISNVIRPGTLAVRLTANMIAGHLLMTLLGNTGPMSTSYIILSLILITQIALLVLESAVAIIQSYVFAVLSTLYSSEVN.

The next 5 membrane-spanning stretches (helical) occupy residues 18-38, 74-94, 100-120, 162-182, and 187-207; these read LSLN…TYWL, FVSL…PYIF, LTLT…YGWI, LTAN…TGPM, and IILS…SAVA.

This sequence belongs to the ATPase A chain family. As to quaternary structure, F-type ATPases have 2 components, CF(1) - the catalytic core - and CF(0) - the membrane proton channel. CF(1) has five subunits: alpha(3), beta(3), gamma(1), delta(1), epsilon(1). CF(0) has three main subunits: a, b and c.

The protein resides in the mitochondrion inner membrane. Its function is as follows. Mitochondrial membrane ATP synthase (F(1)F(0) ATP synthase or Complex V) produces ATP from ADP in the presence of a proton gradient across the membrane which is generated by electron transport complexes of the respiratory chain. F-type ATPases consist of two structural domains, F(1) - containing the extramembraneous catalytic core and F(0) - containing the membrane proton channel, linked together by a central stalk and a peripheral stalk. During catalysis, ATP synthesis in the catalytic domain of F(1) is coupled via a rotary mechanism of the central stalk subunits to proton translocation. Key component of the proton channel; it may play a direct role in the translocation of protons across the membrane. This Aedes aegypti (Yellowfever mosquito) protein is ATP synthase subunit a.